The primary structure comprises 883 residues: Alanine--tRNA ligase (883 aa).

H560, H564, C665, and H669 together coordinate Zn(2+).

Belongs to the class-II aminoacyl-tRNA synthetase family. The cofactor is Zn(2+).

The protein localises to the cytoplasm. It carries out the reaction tRNA(Ala) + L-alanine + ATP = L-alanyl-tRNA(Ala) + AMP + diphosphate. Functionally, catalyzes the attachment of alanine to tRNA(Ala) in a two-step reaction: alanine is first activated by ATP to form Ala-AMP and then transferred to the acceptor end of tRNA(Ala). Also edits incorrectly charged Ser-tRNA(Ala) and Gly-tRNA(Ala) via its editing domain. This chain is Alanine--tRNA ligase, found in Mesomycoplasma hyopneumoniae (strain 7448) (Mycoplasma hyopneumoniae).